We begin with the raw amino-acid sequence, 169 residues long: Endoribonuclease YbeY (169 aa).

Zn(2+) is bound by residues His130, His134, and His140.

Belongs to the endoribonuclease YbeY family. Requires Zn(2+) as cofactor.

The protein resides in the cytoplasm. Single strand-specific metallo-endoribonuclease involved in late-stage 70S ribosome quality control and in maturation of the 3' terminus of the 16S rRNA. This is Endoribonuclease YbeY from Neisseria meningitidis serogroup B (strain ATCC BAA-335 / MC58).